A 97-amino-acid polypeptide reads, in one-letter code: Co-chaperonin GroES (97 aa).

It belongs to the GroES chaperonin family. In terms of assembly, heptamer of 7 subunits arranged in a ring. Interacts with the chaperonin GroEL.

The protein localises to the cytoplasm. Together with the chaperonin GroEL, plays an essential role in assisting protein folding. The GroEL-GroES system forms a nano-cage that allows encapsulation of the non-native substrate proteins and provides a physical environment optimized to promote and accelerate protein folding. GroES binds to the apical surface of the GroEL ring, thereby capping the opening of the GroEL channel. This chain is Co-chaperonin GroES, found in Yersinia enterocolitica serotype O:8 / biotype 1B (strain NCTC 13174 / 8081).